A 273-amino-acid polypeptide reads, in one-letter code: MIRLALFGSGVSSSLSPAIYRGFAAKRGLRLEYRVYEAGPGGLAPALRMAGELHGFNVTKPLKREALSLASTLDSHARAIGAVNTMVAGEEGWEGFNTDWKGFLDSLKLYTASPPDTALVIGAGGAGRAAAYALATWGAGRVLIASRTGLTARRAAQDLAGLGAEVEPVPPGGLEDAAAASDVVVNATPLGWDGVSTPVERGFREGCIAVDMVYRPLATPFLRRAAASGCTPVDGLWMLAIQAAENIAVWLGLEASPVELRTYALEAMRGGRG.

Residues 14–16 (SLS) and T59 each bind shikimate. The Proton acceptor role is filled by K63. Shikimate is bound by residues N84 and D99. NADP(+)-binding positions include 122 to 126 (GAGGA) and M212. Y214 is a shikimate binding site. NADP(+) is bound at residue G235.

This sequence belongs to the shikimate dehydrogenase family. In terms of assembly, homodimer.

The catalysed reaction is shikimate + NADP(+) = 3-dehydroshikimate + NADPH + H(+). It participates in metabolic intermediate biosynthesis; chorismate biosynthesis; chorismate from D-erythrose 4-phosphate and phosphoenolpyruvate: step 4/7. Functionally, involved in the biosynthesis of the chorismate, which leads to the biosynthesis of aromatic amino acids. Catalyzes the reversible NADPH linked reduction of 3-dehydroshikimate (DHSA) to yield shikimate (SA). This Aeropyrum pernix (strain ATCC 700893 / DSM 11879 / JCM 9820 / NBRC 100138 / K1) protein is Shikimate dehydrogenase (NADP(+)).